We begin with the raw amino-acid sequence, 148 residues long: Putative FAD-linked sulfhydryl oxidase 096R (148 aa).

Residues 1 to 103 (MSIDPKLWGN…LAAKTVFQRY (103 aa)) form the ERV/ALR sulfhydryl oxidase domain. Cysteine 48 and cysteine 51 form a disulfide bridge. The helical transmembrane segment at 122–142 (WSPWLTTALAVILVVVVAGIG) threads the bilayer.

Belongs to the IIV-6 347L family. FAD is required as a cofactor.

The protein resides in the membrane. The enzyme catalyses 2 R'C(R)SH + O2 = R'C(R)S-S(R)CR' + H2O2. FAD-dependent sulfhydryl oxidase that catalyzes disulfide bond formation. The protein is Putative FAD-linked sulfhydryl oxidase 096R of Aedes vexans (Inland floodwater mosquito).